The sequence spans 79 residues: Conotoxin VnMSGL-0122 (79 aa).

A signal peptide spans Met-1–Ser-20. Positions His-21 to Thr-44 are excised as a propeptide. 3 disulfides stabilise this stretch: Cys-52–Cys-64, Cys-56–Cys-73, and Cys-63–Cys-77. Residue Leu-78 is modified to Leucine amide.

Belongs to the conotoxin O3 superfamily. Expressed by the venom duct.

The protein resides in the secreted. The chain is Conotoxin VnMSGL-0122 from Conus ventricosus (Mediterranean cone).